The chain runs to 998 residues: Methyl sulfide methyltransferase-associated sensor (998 aa).

The 38-residue stretch at 40-77 folds into the PAS 1 domain; that stretch reads FGYSPKDFISGGLGYADIIYPADLEIAVSQFFSYVEKD. The 53-residue stretch at 117-169 folds into the PAC 1 domain; the sequence is FTQQYRLLNKSGDVLWVEAEIKVLEEEEGKAGLFQVTVFDISRWKHTEKAMPA. The PAS 2 domain occupies 209–246; the sequence is LGYTPEDFTSGRIVYTDIIHPDDLDNVRAEVSKNTEEG. The 53-residue stretch at 250–302 folds into the PAC 2 domain; the sequence is FSKEYRVLAKSGEVRYVDERTLIRRNEKGEITCYQGILLDITQRKEAEELILS. The GAF 1 domain maps to 314-458; that stretch reads ASLDEVLLLL…NAYLAGIAIE (145 aa). The PAS 3 domain occupies 469–540; that stretch reads SENRFRTIFD…ENMQKIKAEG (72 aa). A GAF 2 domain is found at 609 to 752; that stretch reads ASLKEITDFA…LMQGMWQLIQ (144 aa). C656 is a heme binding site. The Histidine kinase domain maps to 783 to 998; it reads EFVEEMMFPE…GNLMHVKLPK (216 aa).

It depends on heme as a cofactor. In terms of processing, autophosphorylates: autophosphorylation is dependent on the redox state of heme cofactor and is promoted upon reduction.

It localises to the cytoplasm. The enzyme catalyses ATP + protein L-histidine = ADP + protein N-phospho-L-histidine.. In terms of biological role, heme-binding sensor kinase component part of a two-component regulatory system involved in methyl sulfide metabolism. Does not act as a phytochrome-like photoreceptor. This chain is Methyl sulfide methyltransferase-associated sensor (msmS), found in Methanosarcina acetivorans (strain ATCC 35395 / DSM 2834 / JCM 12185 / C2A).